An 83-amino-acid polypeptide reads, in one-letter code: Male-specific opa-containing protein (83 aa).

An N-terminal signal peptide occupies residues methionine 1–alanine 18. Positions aspartate 23–glycine 83 are disordered. Over residues proline 28 to alanine 49 the composition is skewed to low complexity. Positions proline 50 to alanine 59 are enriched in pro residues.

In terms of tissue distribution, adult male abdomen.

In terms of biological role, may be a male specific regulatory factor. This Drosophila melanogaster (Fruit fly) protein is Male-specific opa-containing protein (msopa).